We begin with the raw amino-acid sequence, 446 residues long: N-succinylarginine dihydrolase (446 aa).

Substrate-binding positions include 19 to 28, Asn-110, and 137 to 138; these read AGLSFGNVAS and HR. The active site involves Glu-174. Position 213 (Arg-213) interacts with substrate. Residue His-249 is part of the active site. Residues Asp-251 and Asn-364 each contribute to the substrate site. Cys-370 serves as the catalytic Nucleophile.

The protein belongs to the succinylarginine dihydrolase family. Homodimer.

The catalysed reaction is N(2)-succinyl-L-arginine + 2 H2O + 2 H(+) = N(2)-succinyl-L-ornithine + 2 NH4(+) + CO2. It functions in the pathway amino-acid degradation; L-arginine degradation via AST pathway; L-glutamate and succinate from L-arginine: step 2/5. In terms of biological role, catalyzes the hydrolysis of N(2)-succinylarginine into N(2)-succinylornithine, ammonia and CO(2). The polypeptide is N-succinylarginine dihydrolase (Burkholderia thailandensis (strain ATCC 700388 / DSM 13276 / CCUG 48851 / CIP 106301 / E264)).